A 594-amino-acid chain; its full sequence is NADH-quinone oxidoreductase subunit C/D (594 aa).

The interval 1 to 185 (MTTGSALYIP…DPFSLNLAKQ (185 aa)) is NADH dehydrogenase I subunit C. Positions 209–594 (DYMFLNLGPN…IDFVMADVDR (386 aa)) are NADH dehydrogenase I subunit D.

This sequence in the N-terminal section; belongs to the complex I 30 kDa subunit family. In the C-terminal section; belongs to the complex I 49 kDa subunit family. In terms of assembly, NDH-1 is composed of 13 different subunits. Subunits NuoB, CD, E, F, and G constitute the peripheral sector of the complex.

The protein localises to the cell inner membrane. The enzyme catalyses a quinone + NADH + 5 H(+)(in) = a quinol + NAD(+) + 4 H(+)(out). Functionally, NDH-1 shuttles electrons from NADH, via FMN and iron-sulfur (Fe-S) centers, to quinones in the respiratory chain. The immediate electron acceptor for the enzyme in this species is believed to be ubiquinone. Couples the redox reaction to proton translocation (for every two electrons transferred, four hydrogen ions are translocated across the cytoplasmic membrane), and thus conserves the redox energy in a proton gradient. The sequence is that of NADH-quinone oxidoreductase subunit C/D from Pseudomonas fluorescens (strain SBW25).